Consider the following 389-residue polypeptide: tRNA-specific 2-thiouridylase MnmA (389 aa).

Residues 35–42 and Met61 each bind ATP; that span reads GMSGGVDS. Residues 121–123 form an interaction with target base in tRNA region; the sequence is NPD. Cys126 serves as the catalytic Nucleophile. A disulfide bridge connects residues Cys126 and Cys223. Gly151 serves as a coordination point for ATP. The interval 173–175 is interaction with tRNA; it reads KDQ. The active-site Cysteine persulfide intermediate is the Cys223. The interaction with tRNA stretch occupies residues 335–336; sequence RY.

Belongs to the MnmA/TRMU family.

Its subcellular location is the cytoplasm. The catalysed reaction is S-sulfanyl-L-cysteinyl-[protein] + uridine(34) in tRNA + AH2 + ATP = 2-thiouridine(34) in tRNA + L-cysteinyl-[protein] + A + AMP + diphosphate + H(+). Functionally, catalyzes the 2-thiolation of uridine at the wobble position (U34) of tRNA, leading to the formation of s(2)U34. This chain is tRNA-specific 2-thiouridylase MnmA, found in Actinobacillus pleuropneumoniae serotype 3 (strain JL03).